The following is a 1415-amino-acid chain: MKINKIILFFFLSCLYLFSSSVSAQQLLGEIEITEKSFTIDASVINTKINYLIDNTITKPKLSVTSIFGEATSIDDILRISDDKKSLTFGDYTSSTLSSSNKLVSKINLNSLILISFSTIITFGLFTKNNPRSSSKPLLFIVLLICISIFNLSNSIKISEVSVRIDIKVPSTFKFDSLILTLGSGSSIINGLIASSLKIDGCTTNSKDHSIELNQISISSELNICSTKEININEIQLTSTNVKLNLTSSSNVNLDFHNGYSGSFSINTNDLTLDSACETFKDSNTGIIIGTCNGGSDNSKLSITAITGKTVVSNAEITCPIDNSWRVTVGADNVPPSPSIITSQPATDFIFKKNDLVYMAQYGYSNQSITDGPVENSFIVSYPAYIPPSNFLVSKIIGSPTFKANVKYQFSISVKLGQPLGSFNRIQNMSLYFFNPRDITDPINGASQYYELKDTIPLFVHTFEGNFTSNTEFALTKIEFTPTVDIGTSIFGLRIFRTGFTGGDVVTVIIKDMKFTILPKTITQPTLLIKDSELVNLPKPSTSFDPQDSSTCPYLANDLVHWHNPSTWPNGIIPSPSSNITLPEGKKVLISPCSISQTQVYKWIKVPSTSELIFADSPMDFHVKDIYVEGKFIMGTTKCRYNSKINIIFHGEKTLSDTISQYYGSKGIGVSSSGFISVHAKQYHNTWSKLSASAWSGDYVVYIQDNVNWEVGQKVVVITSYYQDEDNNQNEVMTIAAIQGKTIQFTEPLKFFHYGGQEYQAEIALLTRRITFQSSDVNQFGGHVMVMGEGQFAGLGLIGMGQRNIKARYPLHYHLGKVLKNSYISDCSVTNSYYRCYTIHGTNNVTLTRNVAFDVSGHCYYLEDGVEMDNTISFNLAAYVHPIGRPAAGPSQIGEVFVESDNLRQPADCAASGYYITNAWNKIIGNTASGGWAGYAFPNLDKPIGNHRTVQMIPKAYSTKVFEGNTGHSSGHFFITGATIYVGANLTYNEVDGLLYYDSGRFERFTYKNGTVVYGNEVPMRFNNTKIYLSNFGIGHWGEYVEVVSYESHDNIRSASIFGEAWLSKAIVNGNSNNIARSINFNKQGFQYYDTYVKTVLSNISFRNYIRNPKSLNDEDDNRAIISMTHGDVFKPQGISTARAISFVNVAKSQIVGHQVLPTSGSRYFNFIDWDSSITGKKPGQPALVGSHELWYKFDNTCEYNSDWTCHICEKGNKEIANIQFIIPGLIDDGVLVYDSFENLNVGNISLFGSGITERRSTIVTKNQGVTGVSNMGWYLYLKAGSPKYMKIWLSQVVYGQHIFLALPYPTQTTFIIKSNYIWGSAINYNHVFSLASSAADVRSGNGTKYYFDGNFLYVKLVNLVLTGDPSEYYERDGVKVYWVRNSFSVSIEATNTVTPPTSDGFFKNLPDNLPSSSL.

An N-terminal signal peptide occupies residues 1-24 (MKINKIILFFFLSCLYLFSSSVSA). 2 helical membrane-spanning segments follow: residues 107-127 (INLN…GLFT) and 138-158 (LLFI…SIKI). N-linked (GlcNAc...) asparagine glycans are attached at residues Asn245, Asn366, Asn428, Asn466, and Asn579. In terms of domain architecture, G8 spans 566-692 (STWPNGIIPS…YHNTWSKLSA (127 aa)). 2 PbH1 repeats span residues 819 to 841 (LKNS…TIHG) and 842 to 864 (TNNV…YLED). N-linked (GlcNAc...) asparagine glycans are attached at residues Asn844, Asn985, Asn1009, Asn1023, Asn1099, Asn1244, and Asn1342.

The protein belongs to the comF family.

It localises to the membrane. The chain is G8 domain-containing protein DDB_G0278975 from Dictyostelium discoideum (Social amoeba).